We begin with the raw amino-acid sequence, 588 residues long: Ankyrin repeat and SOCS box protein 15 (588 aa).

ANK repeat units follow at residues 75–104 (KGWF…KTLW), 110–139 (DGET…WPNT), 143–172 (KGET…SLDQ), 176–205 (KRWS…NVHL), 209–238 (FGVT…DVLA), 242–271 (DGAS…SGNI), 275–304 (AGHL…KHAI), 307–336 (SGLT…DVNS), 349–378 (ERKT…DPNL), 379–408 (DPLN…NVNC), and 416–444 (TRFP…QVEM). In terms of domain architecture, SOCS box spans 524-579 (WPEIRQILENPCSLKHLCRLKIRRLMGLQRLCQPTLMEKLSLPPTIQRYILFKEYD).

This sequence belongs to the ankyrin SOCS box (ASB) family.

The protein operates within protein modification; protein ubiquitination. Functionally, may be a substrate-recognition component of a SCF-like ECS (Elongin-Cullin-SOCS-box protein) E3 ubiquitin-protein ligase complex which mediates the ubiquitination and subsequent proteasomal degradation of target proteins. This is Ankyrin repeat and SOCS box protein 15 (ASB15) from Bos taurus (Bovine).